The chain runs to 252 residues: Mediator of RNA polymerase II transcription subunit 4 (252 aa).

Residues 70-112 (KIHQEMQVLEKEVEKRDSDIQQLQKQLKEAEHILATAVYQAKE) adopt a coiled-coil conformation. The disordered stretch occupies residues 218-252 (HSNEFLMESLGPNKENEEDVEVMSTDSSSSSSDSD). Residues 241 to 252 (STDSSSSSSDSD) show a composition bias toward low complexity.

Belongs to the Mediator complex subunit 4 family. As to quaternary structure, component of the Mediator complex.

The protein localises to the nucleus. Its function is as follows. Component of the Mediator complex, a coactivator involved in the regulated transcription of nearly all RNA polymerase II-dependent genes. Mediator functions as a bridge to convey information from gene-specific regulatory proteins to the basal RNA polymerase II transcription machinery. Mediator is recruited to promoters by direct interactions with regulatory proteins and serves as a scaffold for the assembly of a functional preinitiation complex with RNA polymerase II and the general transcription factors. In Xenopus tropicalis (Western clawed frog), this protein is Mediator of RNA polymerase II transcription subunit 4 (med4).